The chain runs to 347 residues: NADH-ubiquinone oxidoreductase chain 2 (347 aa).

10 consecutive transmembrane segments (helical) span residues 13–33 (IVLGTMIVMTSSHWLMIWMGF), 59–79 (YFLTQATASMLLMLAIIINLV), 96–116 (IIMTVALAMKMGLAPFHFWVP), 122–142 (ISLLSGLILLTWQKLAPLSVL), 144–164 (VISPIINLDLLLTMSILSILI), 178–200 (ILAYSSIAHMGWMTSILIFNPMM), 210–232 (LMTATTFTLFMTTSTTTTLALSH), 246–266 (IIMLSLGGLPPLVGFLPKWMI), 276–296 (IILATLMAITALLNLFFYMRL), and 326–346 (LPMLIVLSTMTLPLAPAMILL).

Belongs to the complex I subunit 2 family. In terms of assembly, core subunit of respiratory chain NADH dehydrogenase (Complex I) which is composed of 45 different subunits. Interacts with TMEM242.

The protein resides in the mitochondrion inner membrane. It carries out the reaction a ubiquinone + NADH + 5 H(+)(in) = a ubiquinol + NAD(+) + 4 H(+)(out). In terms of biological role, core subunit of the mitochondrial membrane respiratory chain NADH dehydrogenase (Complex I) which catalyzes electron transfer from NADH through the respiratory chain, using ubiquinone as an electron acceptor. Essential for the catalytic activity and assembly of complex I. The polypeptide is NADH-ubiquinone oxidoreductase chain 2 (Rhynchonycteris naso (Brazilian long-nosed bat)).